A 180-amino-acid polypeptide reads, in one-letter code: Inner membrane-spanning protein YciB (180 aa).

The next 5 helical transmembrane spans lie at 25-45 (QNAT…CYVI), 49-69 (VSKL…ITLI), 76-96 (IKIK…MSGI), 118-138 (IILS…NEIV), and 150-170 (FKVF…LPLL).

The protein belongs to the YciB family.

Its subcellular location is the cell inner membrane. Plays a role in cell envelope biogenesis, maintenance of cell envelope integrity and membrane homeostasis. This Rickettsia felis (strain ATCC VR-1525 / URRWXCal2) (Rickettsia azadi) protein is Inner membrane-spanning protein YciB.